A 264-amino-acid polypeptide reads, in one-letter code: Thiazole synthase (264 aa).

Residue Lys106 is the Schiff-base intermediate with DXP of the active site. 1-deoxy-D-xylulose 5-phosphate-binding positions include Gly167, 193-194, and 215-216; these read AG and NT.

Belongs to the ThiG family. Homotetramer. Forms heterodimers with either ThiH or ThiS.

It is found in the cytoplasm. It carries out the reaction [ThiS sulfur-carrier protein]-C-terminal-Gly-aminoethanethioate + 2-iminoacetate + 1-deoxy-D-xylulose 5-phosphate = [ThiS sulfur-carrier protein]-C-terminal Gly-Gly + 2-[(2R,5Z)-2-carboxy-4-methylthiazol-5(2H)-ylidene]ethyl phosphate + 2 H2O + H(+). The protein operates within cofactor biosynthesis; thiamine diphosphate biosynthesis. Functionally, catalyzes the rearrangement of 1-deoxy-D-xylulose 5-phosphate (DXP) to produce the thiazole phosphate moiety of thiamine. Sulfur is provided by the thiocarboxylate moiety of the carrier protein ThiS. In vitro, sulfur can be provided by H(2)S. The chain is Thiazole synthase from Xanthomonas axonopodis pv. citri (strain 306).